A 729-amino-acid chain; its full sequence is MAAGVEAAAEVAATEPKMEEESGAPCVPSGNGAPGPKGEERPTQNEKRKEKNIKRGGNRFEPYSNPTKRYRAFITNIPFDVKWQSLKDLVKEKVGEVTYVELLMDAEGKSRGCAVVEFKMEESMKKAAEVLNKHSLSGRPLKVKEDPDGEHARRAMQKVMATTGGMGMGPGGPGMINIPPSILNNPNIPNEIIHALQAGRLGSTVFVANLDYKVGWKKLKEVFSMAGVVVRADILEDKDGKSRGIGIVTFEQSIEAVQAISMFNGQLLFDRPMHVKMDERALPKGDFFPPERPQQLPHGLGGIGMGLGPGGQPIDANHLSKGIGMGNLGPAGMGMEGIGFGINKIGGMEGPFGGGMENMGRFGSGMNMGRINEILSNALKRGEIIAKQGGGGAGGSVPGIERMGPGIDRISGAGMERMGAGLGHGMDRVGSEIERMGLVMDRMGSVERMGSSIERMGPLGLDHMASSIERMGQTMERIGSGVERMGAGMGFGLERMAAPIDRVGQTIERMGSGVERMGPAIERMGLSMDRMVPTGMGASLERMGPVMDRMATGLERMGANNLERMGLERMGANSLERMGLERMGANSLERMGPAMGPALGAGIERMGLAMGGAGGASFDRAIEMERGNFGGSFAGSFGGAGGHAPGVARKACQIFVRNLPFDFTWKMLKDKFNECGHVLYADIKMENGKSKGCGVVKFESPEVAERACRMMNGMKLSGREIDVRIDRNA.

The span at 1–13 (MAAGVEAAAEVAA) shows a compositional bias: low complexity. The segment at 1–65 (MAAGVEAAAE…GGNRFEPYSN (65 aa)) is disordered. An N-acetylalanine modification is found at Ala2. Lys17 is covalently cross-linked (Glycyl lysine isopeptide (Lys-Gly) (interchain with G-Cter in SUMO2)). Ser29 bears the Phosphoserine mark. Residues Lys37, Lys68, and Lys82 each participate in a glycyl lysine isopeptide (Lys-Gly) (interchain with G-Cter in SUMO2) cross-link. Over residues 37 to 49 (KGEERPTQNEKRK) the composition is skewed to basic and acidic residues. 2 consecutive RRM domains span residues 70 to 148 (YRAF…EDPD) and 203 to 280 (STVF…MDER). Position 85 is a phosphoserine (Ser85). Residues Lys87 and Lys126 each participate in a glycyl lysine isopeptide (Lys-Gly) (interchain with G-Cter in SUMO2) cross-link. Lys133 is subject to N6-acetyllysine; alternate. A Glycyl lysine isopeptide (Lys-Gly) (interchain with G-Cter in SUMO2); alternate cross-link involves residue Lys133. Residues Lys142 and Lys144 each participate in a glycyl lysine isopeptide (Lys-Gly) (interchain with G-Cter in SUMO2) cross-link. Ser203 is modified (phosphoserine). A Glycyl lysine isopeptide (Lys-Gly) (interchain with G-Cter in SUMO2) cross-link involves residue Lys220. Lys276 carries the post-translational modification N6-acetyllysine; alternate. Lys276 is covalently cross-linked (Glycyl lysine isopeptide (Lys-Gly) (interchain with G-Cter in SUMO2); alternate). Glycyl lysine isopeptide (Lys-Gly) (interchain with G-Cter in SUMO2) cross-links involve residues Lys284 and Lys344. Ser364 and Ser376 each carry phosphoserine. Residues Lys380 and Lys387 each participate in a glycyl lysine isopeptide (Lys-Gly) (interchain with G-Cter in SUMO2) cross-link. Phosphoserine is present on Ser396. 4 tandem repeats follow at residues 399–404 (GIERMG), 406–411 (GIDRIS), 414–419 (GMERMG), and 425–430 (GMDRVG). The segment at 399-607 (GIERMGPGID…ALGAGIERMG (209 aa)) is 27 X 6 AA repeats of [GEVSTPAN]-[ILMV]-[DE]-[RH]-[MLVI]-[GAV]. Ser431 is modified (phosphoserine). Repeat copies occupy residues 432–437 (EIERMG), 439–444 (VMDRMG), and 445–450 (SVERMG). Residue Ser451 is modified to Phosphoserine. Tandem repeats lie at residues 452-457 (SIERMG), 460-465 (GLDHMA), 467-472 (SIERMG), and 474-479 (TMERIG). Ser467 is subject to Phosphoserine. The residue at position 480 (Ser480) is a Phosphoserine. 16 tandem repeats follow at residues 481–486 (GVERMG), 492–497 (GLERMA), 499–504 (PIDRVG), 506–511 (TIERMG), 513–518 (GVERMG), 520–525 (AIERMG), 527–532 (SMDRMV), 539–544 (SLERMG), 546–551 (VMDRMA), 553–558 (GLERMG), 561–566 (NLERMG), 567–571 (LERMG), 574–579 (SLERMG), 580–584 (LERMG), 587–592 (SLERMG), and 602–607 (GIERMG). Position 495 is an omega-N-methylarginine (Arg495). Ser527 is modified (phosphoserine). Ser574 carries the phosphoserine modification. Ser587 is modified (phosphoserine). Phosphoserine occurs at positions 617, 632, and 636. A Glycyl lysine isopeptide (Lys-Gly) (interchain with G-Cter in SUMO2) cross-link involves residue Lys650. The RRM 3 domain occupies 652 to 728 (CQIFVRNLPF…REIDVRIDRN (77 aa)). Thr664 carries the phosphothreonine modification. Lys666 participates in a covalent cross-link: Glycyl lysine isopeptide (Lys-Gly) (interchain with G-Cter in SUMO2). The residue at position 671 (Lys671) is an N6-acetyllysine. Residues Lys684 and Lys691 each participate in a glycyl lysine isopeptide (Lys-Gly) (interchain with G-Cter in SUMO2) cross-link. At Lys697 the chain carries N6-acetyllysine; alternate. Lys697 is covalently cross-linked (Glycyl lysine isopeptide (Lys-Gly) (interchain with G-Cter in SUMO2); alternate). Residue Lys697 forms a Glycyl lysine isopeptide (Lys-Gly) (interchain with G-Cter in SUMO1); alternate linkage. Ser700 is subject to Phosphoserine. Lys715 participates in a covalent cross-link: Glycyl lysine isopeptide (Lys-Gly) (interchain with G-Cter in SUMO2).

Identified in the spliceosome C complex. Interacts with PPIA/CYPA. Sumoylated.

The protein localises to the nucleus. In terms of biological role, pre-mRNA binding protein in vivo, binds avidly to poly(G) and poly(U) RNA homopolymers in vitro. Involved in splicing. Acts as a receptor for carcinoembryonic antigen in Kupffer cells, may initiate a series of signaling events leading to tyrosine phosphorylation of proteins and induction of IL-1 alpha, IL-6, IL-10 and tumor necrosis factor alpha cytokines. In Mus musculus (Mouse), this protein is Heterogeneous nuclear ribonucleoprotein M (Hnrnpm).